We begin with the raw amino-acid sequence, 195 residues long: Imidazole glycerol phosphate synthase subunit HisH (195 aa).

A Glutamine amidotransferase type-1 domain is found at 1–193 (MIAIVDYGVG…RETTCNSTQQ (193 aa)). Cysteine 78 acts as the Nucleophile in catalysis. Active-site residues include histidine 168 and glutamate 170.

Heterodimer of HisH and HisF.

The protein resides in the cytoplasm. The enzyme catalyses 5-[(5-phospho-1-deoxy-D-ribulos-1-ylimino)methylamino]-1-(5-phospho-beta-D-ribosyl)imidazole-4-carboxamide + L-glutamine = D-erythro-1-(imidazol-4-yl)glycerol 3-phosphate + 5-amino-1-(5-phospho-beta-D-ribosyl)imidazole-4-carboxamide + L-glutamate + H(+). It catalyses the reaction L-glutamine + H2O = L-glutamate + NH4(+). Its pathway is amino-acid biosynthesis; L-histidine biosynthesis; L-histidine from 5-phospho-alpha-D-ribose 1-diphosphate: step 5/9. IGPS catalyzes the conversion of PRFAR and glutamine to IGP, AICAR and glutamate. The HisH subunit catalyzes the hydrolysis of glutamine to glutamate and ammonia as part of the synthesis of IGP and AICAR. The resulting ammonia molecule is channeled to the active site of HisF. The polypeptide is Imidazole glycerol phosphate synthase subunit HisH (Exiguobacterium sibiricum (strain DSM 17290 / CCUG 55495 / CIP 109462 / JCM 13490 / 255-15)).